The sequence spans 337 residues: Phenylalanine--tRNA ligase alpha subunit (337 aa).

A Mg(2+)-binding site is contributed by E258.

It belongs to the class-II aminoacyl-tRNA synthetase family. Phe-tRNA synthetase alpha subunit type 1 subfamily. In terms of assembly, tetramer of two alpha and two beta subunits. Requires Mg(2+) as cofactor.

The protein resides in the cytoplasm. It carries out the reaction tRNA(Phe) + L-phenylalanine + ATP = L-phenylalanyl-tRNA(Phe) + AMP + diphosphate + H(+). This is Phenylalanine--tRNA ligase alpha subunit from Burkholderia cenocepacia (strain ATCC BAA-245 / DSM 16553 / LMG 16656 / NCTC 13227 / J2315 / CF5610) (Burkholderia cepacia (strain J2315)).